Here is a 212-residue protein sequence, read N- to C-terminus: Regulator of G-protein signaling 2 (212 aa).

2 disordered regions span residues 11–33 (HDCG…REKM) and 48–69 (FLQN…PQTF). The interval 32–66 (KMKRTLLKDWKTRLSYFLQNSSSPGKPKTGKKSKP) is necessary for membrane association. Positions 79-116 (LWAEAFDELLASKYGLAAFRAFLKSEFCEENIEFWLAC) are necessary to inhibit protein synthesis. Residues 83 to 199 (AFDELLASKY…LESEFYQDLC (117 aa)) form the RGS domain.

In terms of assembly, interacts with GNAQ. Does not interact with GNAI1 and GNAI3. Interacts with EIF2B5. Interacts with PRKG1 (isoform alpha). Phosphorylated by protein kinase C. Phosphorylation by PRKG1 leads to activation of RGS2 activity.

Its subcellular location is the cell membrane. The protein localises to the cytoplasm. The protein resides in the nucleus. It localises to the nucleolus. Functionally, regulates G protein-coupled receptor signaling cascades. Inhibits signal transduction by increasing the GTPase activity of G protein alpha subunits, thereby driving them into their inactive GDP-bound form. It is involved in the negative regulation of the angiotensin-activated signaling pathway. Plays a role in the regulation of blood pressure in response to signaling via G protein-coupled receptors and GNAQ. Plays a role in regulating the constriction and relaxation of vascular smooth muscle. Binds EIF2B5 and blocks its activity, thereby inhibiting the translation of mRNA into protein. The protein is Regulator of G-protein signaling 2 (RGS2) of Sus scrofa (Pig).